The chain runs to 95 residues: Acyl carrier protein (95 aa).

Positions 4-79 constitute a Carrier domain; that stretch reads KEIFERIEQV…HVMELTLDLV (76 aa). Serine 39 carries the post-translational modification O-(pantetheine 4'-phosphoryl)serine.

This sequence belongs to the acyl carrier protein (ACP) family. In terms of processing, 4'-phosphopantetheine is transferred from CoA to a specific serine of apo-ACP by AcpS. This modification is essential for activity because fatty acids are bound in thioester linkage to the sulfhydryl of the prosthetic group.

The protein localises to the cytoplasm. The protein operates within lipid metabolism; fatty acid biosynthesis. Functionally, carrier of the growing fatty acid chain in fatty acid biosynthesis. The protein is Acyl carrier protein of Saccharopolyspora erythraea (strain ATCC 11635 / DSM 40517 / JCM 4748 / NBRC 13426 / NCIMB 8594 / NRRL 2338).